The primary structure comprises 63 residues: Small ribosomal subunit protein eS17 (63 aa).

This sequence belongs to the eukaryotic ribosomal protein eS17 family.

The protein is Small ribosomal subunit protein eS17 of Methanococcus maripaludis (strain C6 / ATCC BAA-1332).